The following is a 181-amino-acid chain: Large ribosomal subunit protein uL6 (181 aa).

Belongs to the universal ribosomal protein uL6 family. In terms of assembly, part of the 50S ribosomal subunit.

In terms of biological role, this protein binds to the 23S rRNA, and is important in its secondary structure. It is located near the subunit interface in the base of the L7/L12 stalk, and near the tRNA binding site of the peptidyltransferase center. The sequence is that of Large ribosomal subunit protein uL6 from Hydrogenobaculum sp. (strain Y04AAS1).